Reading from the N-terminus, the 342-residue chain is Phosphate acyltransferase (342 aa).

It belongs to the PlsX family. Homodimer. Probably interacts with PlsY.

Its subcellular location is the cytoplasm. It carries out the reaction a fatty acyl-[ACP] + phosphate = an acyl phosphate + holo-[ACP]. Its pathway is lipid metabolism; phospholipid metabolism. In terms of biological role, catalyzes the reversible formation of acyl-phosphate (acyl-PO(4)) from acyl-[acyl-carrier-protein] (acyl-ACP). This enzyme utilizes acyl-ACP as fatty acyl donor, but not acyl-CoA. This is Phosphate acyltransferase from Shewanella loihica (strain ATCC BAA-1088 / PV-4).